A 120-amino-acid chain; its full sequence is Aspartate 1-decarboxylase (120 aa).

The active-site Schiff-base intermediate with substrate; via pyruvic acid is Ser25. Ser25 carries the post-translational modification Pyruvic acid (Ser). Thr57 contributes to the substrate binding site. The Proton donor role is filled by Tyr58. Residue 73–75 (GAA) participates in substrate binding.

Belongs to the PanD family. In terms of assembly, heterooctamer of four alpha and four beta subunits. The cofactor is pyruvate. Post-translationally, is synthesized initially as an inactive proenzyme, which is activated by self-cleavage at a specific serine bond to produce a beta-subunit with a hydroxyl group at its C-terminus and an alpha-subunit with a pyruvoyl group at its N-terminus.

The protein localises to the cytoplasm. It carries out the reaction L-aspartate + H(+) = beta-alanine + CO2. The protein operates within cofactor biosynthesis; (R)-pantothenate biosynthesis; beta-alanine from L-aspartate: step 1/1. Catalyzes the pyruvoyl-dependent decarboxylation of aspartate to produce beta-alanine. This is Aspartate 1-decarboxylase from Polynucleobacter asymbioticus (strain DSM 18221 / CIP 109841 / QLW-P1DMWA-1) (Polynucleobacter necessarius subsp. asymbioticus).